Reading from the N-terminus, the 650-residue chain is ATP-binding cassette sub-family G member 3 (650 aa).

Topologically, residues 1 to 387 are cytoplasmic; that stretch reads MASNNDPTVI…KNFKGFPWVT (387 aa). Residues 37–279 enclose the ABC transporter domain; it reads LSFHNISYQE…FRSAGYNYES (243 aa). The ABC transmembrane type-2 domain occupies 381–644; the sequence is KGFPWVTVIQ…TITYVQLLQV (264 aa). Residues 388–408 traverse the membrane as a helical segment; that stretch reads VIQAIITVILATAVGTAFRVL. The Extracellular segment spans residues 409-420; sequence KNDCIEVQMRAG. The chain crosses the membrane as a helical span at residues 421–441; that stretch reads LLYLLTIFQCITSVSAGELFV. The Cytoplasmic segment spans residues 442–469; it reads IDRVRFLHEHTSGYYRVSSYFFGKLLAE. Residues 470 to 490 traverse the membrane as a helical segment; the sequence is LIPRRLLPSTVFSLITYVIAG. At 491-498 the chain is on the extracellular side; the sequence is VKMSMKCF. A helical transmembrane segment spans residues 499–519; sequence FTMICTIMVLAYSASSLPLSI. Over 520 to 527 the chain is Cytoplasmic; it reads GAGENAVA. Residues 528 to 548 traverse the membrane as a helical segment; it reads VPTLLVTIYFVFMLFFSGLSL. The Extracellular segment spans residues 549 to 623; sequence YSGSFLPKLS…LSSWGFWENH (75 aa). A helical membrane pass occupies residues 624–644; that stretch reads LALVCTMIILLTITYVQLLQV. The Cytoplasmic portion of the chain corresponds to 645-648; sequence KNIR.

The protein belongs to the ABC transporter superfamily. ABCG family. Eye pigment precursor importer (TC 3.A.1.204) subfamily. In terms of assembly, may dimerize with another subunit to form a functional transporter. In terms of tissue distribution, highest levels of expression in thymus and spleen. Detected in lung and small intestine.

The protein resides in the membrane. The chain is ATP-binding cassette sub-family G member 3 (Abcg3) from Mus musculus (Mouse).